The following is a 412-amino-acid chain: UPF0761 membrane protein lpg0643 (412 aa).

6 consecutive transmembrane segments (helical) span residues 36–56, 99–119, 137–157, 177–197, 210–230, and 241–261; these read ALAF…LAIF, LSIW…FTIE, AFLL…LSLA, ILHY…YVVV, GGLV…YYLI, and AFAT…ITLL.

The protein belongs to the UPF0761 family.

It is found in the cell inner membrane. The sequence is that of UPF0761 membrane protein lpg0643 from Legionella pneumophila subsp. pneumophila (strain Philadelphia 1 / ATCC 33152 / DSM 7513).